The sequence spans 124 residues: Small ribosomal subunit protein uS12 (124 aa).

D89 carries the 3-methylthioaspartic acid modification.

Belongs to the universal ribosomal protein uS12 family. In terms of assembly, part of the 30S ribosomal subunit. Contacts proteins S8 and S17. May interact with IF1 in the 30S initiation complex.

With S4 and S5 plays an important role in translational accuracy. In terms of biological role, interacts with and stabilizes bases of the 16S rRNA that are involved in tRNA selection in the A site and with the mRNA backbone. Located at the interface of the 30S and 50S subunits, it traverses the body of the 30S subunit contacting proteins on the other side and probably holding the rRNA structure together. The combined cluster of proteins S8, S12 and S17 appears to hold together the shoulder and platform of the 30S subunit. In Hamiltonella defensa subsp. Acyrthosiphon pisum (strain 5AT), this protein is Small ribosomal subunit protein uS12.